The primary structure comprises 273 residues: Dermonecrotic toxin LdSicTox-alphaIB1av (273 aa).

His-5 is an active-site residue. Glu-25 and Asp-27 together coordinate Mg(2+). Residue His-41 is the Nucleophile of the active site. Disulfide bonds link Cys-45–Cys-51 and Cys-47–Cys-190. Asp-85 lines the Mg(2+) pocket. N-linked (GlcNAc...) asparagine glycosylation occurs at Asn-250.

It belongs to the arthropod phospholipase D family. Class II subfamily. It depends on Mg(2+) as a cofactor. As to expression, expressed by the venom gland.

The protein localises to the secreted. It carries out the reaction an N-(acyl)-sphingosylphosphocholine = an N-(acyl)-sphingosyl-1,3-cyclic phosphate + choline. The enzyme catalyses an N-(acyl)-sphingosylphosphoethanolamine = an N-(acyl)-sphingosyl-1,3-cyclic phosphate + ethanolamine. The catalysed reaction is a 1-acyl-sn-glycero-3-phosphocholine = a 1-acyl-sn-glycero-2,3-cyclic phosphate + choline. It catalyses the reaction a 1-acyl-sn-glycero-3-phosphoethanolamine = a 1-acyl-sn-glycero-2,3-cyclic phosphate + ethanolamine. Functionally, dermonecrotic toxins cleave the phosphodiester linkage between the phosphate and headgroup of certain phospholipids (sphingolipid and lysolipid substrates), forming an alcohol (often choline) and a cyclic phosphate. This toxin acts on sphingomyelin (SM). It may also act on ceramide phosphoethanolamine (CPE), lysophosphatidylcholine (LPC) and lysophosphatidylethanolamine (LPE), but not on lysophosphatidylserine (LPS), and lysophosphatidylglycerol (LPG). It acts by transphosphatidylation, releasing exclusively cyclic phosphate products as second products. Induces dermonecrosis, hemolysis, increased vascular permeability, edema, inflammatory response, and platelet aggregation. In Loxosceles deserta (Desert recluse spider), this protein is Dermonecrotic toxin LdSicTox-alphaIB1av.